The sequence spans 457 residues: BAG family molecular chaperone regulator 4 (457 aa).

Positions 1-101 (MSALRRSGYG…QPPYPSYNSN (101 aa)) are disordered. Residue Ser-7 is modified to Phosphoserine. Over residues 8-20 (GYGPSDGPSYGRY) the composition is skewed to low complexity. Residues 30–47 (VHPPPPLYPLRPEPPQPP) are compositionally biased toward pro residues. Arg-40, Arg-53, and Arg-108 each carry omega-N-methylarginine. Disordered regions lie at residues 113 to 136 (YPST…NGAY), 166 to 333 (STEV…DDSD), and 347 to 377 (LYGN…ESTP). Positions 166–182 (STEVPSTYRSSGNSPTP) are enriched in polar residues. Arg-185 bears the Omega-N-methylarginine mark. Composition is skewed to low complexity over residues 274–284 (STSPWPSSGSP) and 294–308 (QPKD…SDQS). Polar residues-rich tracts occupy residues 320–333 (QYES…DDSD) and 347–365 (LYGN…SSSL). One can recognise a BAG domain in the interval 379-456 (SIKKIIHVLE…AILEKLEKKG (78 aa)).

In terms of assembly, binds to the ATPase domain of HSP/HSC70 chaperones. Binds to the death domain of TNFRSF1A in the absence of TNF and thereby prevents binding of adapter molecules such as TRADD or TRAF2. Binds to the death domain of TNFRSF12. Interacts with PRKN. In terms of tissue distribution, ubiquitous.

It is found in the cytoplasm. In terms of biological role, inhibits the chaperone activity of HSP70/HSC70 by promoting substrate release. Prevents constitutive TNFRSF1A signaling. Negative regulator of PRKN translocation to damaged mitochondria. This chain is BAG family molecular chaperone regulator 4 (BAG4), found in Homo sapiens (Human).